The following is a 360-amino-acid chain: Epoxide hydrolase 3 (360 aa).

The chain crosses the membrane as a helical span at residues 22–42 (AFMWSLVFSVALVAAAVYGCI). The active-site Nucleophile is the Asp-173. Tyr-281 acts as the Proton donor in catalysis. Catalysis depends on His-337, which acts as the Proton acceptor.

This sequence belongs to the AB hydrolase superfamily. Epoxide hydrolase family.

The protein localises to the microsome membrane. It carries out the reaction an epoxide + H2O = an ethanediol. The enzyme catalyses 9,10-epoxyoctadecanoate + H2O = 9,10-dihydroxyoctadecanoate. It catalyses the reaction 9,10-epoxy-(12Z)-octadecenoate + H2O = 9,10-dihydroxy-(12Z)-octadecenoate. The catalysed reaction is 8,9-epoxy-(5Z,11Z,14Z)-eicosatrienoate + H2O = 8,9-dihydroxy-(5Z,11Z,14Z)-eicosatrienoate. It carries out the reaction 11,12-epoxy-(5Z,8Z,14Z)-eicosatrienoate + H2O = 11,12-dihydroxy-(5Z,8Z,14Z)-eicosatrienoate. The enzyme catalyses 14,15-epoxy-(5Z,8Z,11Z)-eicosatrienoate + H2O = 14,15-dihydroxy-(5Z,8Z,11Z)-eicosatrienoate. With respect to regulation, inhibited by 1-(1-acetylpiperidin-4-yl)-3-(4-(trifl uoromethoxy)phenyl)urea (TPAU), 1-cyclohexyl-3-dodecylurea (CDU), 12-(3-adamantan-1-yl-ureido)-dodecanoic acid (AUDA), 1-((3S, 5S, 7S)-adamantan-1-yl)-3-(5-(2-(2-ethoxyethoxy) ethoxy)pentyl)urea (AEPU) and to a lesser extent by 8-(3-((3S, 5S, 7S)-adamantan-1-yl)ureido) octanoic acid (AUOA). In terms of biological role, catalyzes the hydrolysis of epoxide-containing fatty acids. Active in vitro against epoxyeicosatrienoic acids (EETs) including 8,9-EET, 9,10-EET, 11,12-EET and 14,15-EET and leukotoxin. This chain is Epoxide hydrolase 3 (EPHX3), found in Homo sapiens (Human).